Here is a 198-residue protein sequence, read N- to C-terminus: uncharacterized protein (198 aa).

Transmembrane regions (helical) follow at residues 20 to 40 (VIVGVVLGLAGTGALIGGLWA), 70 to 90 (FFVAPCLMLGLLTVLAVTASV), 107 to 127 (LAIGLMICAATAAAVGALLVW), and 164 to 184 (VAATVLWPAGIAALVYAVLAA).

This sequence to M.tuberculosis Rv1591.

The protein localises to the cell membrane. This is an uncharacterized protein from Mycobacterium leprae (strain TN).